Consider the following 409-residue polypeptide: Putative lipoate-protein ligase A (409 aa).

The 185-residue stretch at 146–330 (GPDNCRLVFY…RFQKTFKVDG (185 aa)) folds into the BPL/LPL catalytic domain. Residues Arg188, 193–196 (GTVL), and Lys249 each bind ATP. Lys249 lines the (R)-lipoate pocket.

The protein belongs to the LplA family. As to quaternary structure, monomer.

It catalyses the reaction L-lysyl-[lipoyl-carrier protein] + (R)-lipoate + ATP = N(6)-[(R)-lipoyl]-L-lysyl-[lipoyl-carrier protein] + AMP + diphosphate + H(+). The protein operates within protein modification; protein lipoylation via exogenous pathway; protein N(6)-(lipoyl)lysine from lipoate: step 1/2. It functions in the pathway protein modification; protein lipoylation via exogenous pathway; protein N(6)-(lipoyl)lysine from lipoate: step 2/2. In terms of biological role, catalyzes both the ATP-dependent activation of exogenously supplied lipoate to lipoyl-AMP and the transfer of the activated lipoyl onto the lipoyl domains of lipoate-dependent enzymes. In Saccharomyces cerevisiae (strain YJM789) (Baker's yeast), this protein is Putative lipoate-protein ligase A (AIM22).